A 313-amino-acid chain; its full sequence is DNA-directed RNA polymerase subunit alpha (313 aa).

The tract at residues 1 to 227 is alpha N-terminal domain (alpha-NTD); sequence MMLDVAPPRF…DFFGLFAEGY (227 aa). Positions 242-313 are alpha C-terminal domain (alpha-CTD); it reads RPVITDERPI…YGYTLESGRE (72 aa).

It belongs to the RNA polymerase alpha chain family. As to quaternary structure, homodimer. The RNAP catalytic core consists of 2 alpha, 1 beta, 1 beta' and 1 omega subunit. When a sigma factor is associated with the core the holoenzyme is formed, which can initiate transcription.

It catalyses the reaction RNA(n) + a ribonucleoside 5'-triphosphate = RNA(n+1) + diphosphate. In terms of biological role, DNA-dependent RNA polymerase catalyzes the transcription of DNA into RNA using the four ribonucleoside triphosphates as substrates. The chain is DNA-directed RNA polymerase subunit alpha from Rubrobacter xylanophilus (strain DSM 9941 / JCM 11954 / NBRC 16129 / PRD-1).